A 389-amino-acid chain; its full sequence is MERVILIVFDSVGIGELPDAKEYGDVGSNTLGNISKAAGGLEIPTLYKLGIGNIQGVENLRRCEKPIGSFGKCAELSKGKDTVTGHWEMAGIVLKTPLNTYPQGFPEDIIEEFQVKIGRKVLGNKVASGTEIINELGKEHVDTGYPIVYTSADSVFQVAAHEKIIPVEELYKMCKIAREMLLGDRTVGRVIARPFIYDKGKYVRTSNRKDFALDPPGKTMLDYIKEVGLDVMAVGKIEDIYNKRGITEAVHIKNNMDGIDKTLGYMKKNKSGLIFANLVDFDMLYGHRNDTEGYAKALVEADKRIPEIISNMNEEDVLIITADHGCDPTTKSTDHSREYIPVLVYGKNLKAGVDIGIRKSYSDIGKTILELLDIKNNLQGIGFKDLINK.

Residues Asp10, Asp282, His287, Asp323, His324, and His335 each contribute to the Mn(2+) site.

It belongs to the phosphopentomutase family. Mn(2+) serves as cofactor.

The protein resides in the cytoplasm. It catalyses the reaction 2-deoxy-alpha-D-ribose 1-phosphate = 2-deoxy-D-ribose 5-phosphate. The enzyme catalyses alpha-D-ribose 1-phosphate = D-ribose 5-phosphate. The protein operates within carbohydrate degradation; 2-deoxy-D-ribose 1-phosphate degradation; D-glyceraldehyde 3-phosphate and acetaldehyde from 2-deoxy-alpha-D-ribose 1-phosphate: step 1/2. Its function is as follows. Isomerase that catalyzes the conversion of deoxy-ribose 1-phosphate (dRib-1-P) and ribose 1-phosphate (Rib-1-P) to deoxy-ribose 5-phosphate (dRib-5-P) and ribose 5-phosphate (Rib-5-P), respectively. In Clostridium kluyveri (strain NBRC 12016), this protein is Phosphopentomutase.